Here is a 412-residue protein sequence, read N- to C-terminus: Lipoyl synthase, mitochondrial (412 aa).

[4Fe-4S] cluster is bound by residues Cys-127, Cys-132, Cys-138, Cys-159, Cys-163, Cys-166, and Ser-375. The Radical SAM core domain occupies Ser-142 to Leu-364.

Belongs to the radical SAM superfamily. Lipoyl synthase family. Requires [4Fe-4S] cluster as cofactor.

It localises to the mitochondrion. The enzyme catalyses [[Fe-S] cluster scaffold protein carrying a second [4Fe-4S](2+) cluster] + N(6)-octanoyl-L-lysyl-[protein] + 2 oxidized [2Fe-2S]-[ferredoxin] + 2 S-adenosyl-L-methionine + 4 H(+) = [[Fe-S] cluster scaffold protein] + N(6)-[(R)-dihydrolipoyl]-L-lysyl-[protein] + 4 Fe(3+) + 2 hydrogen sulfide + 2 5'-deoxyadenosine + 2 L-methionine + 2 reduced [2Fe-2S]-[ferredoxin]. It participates in protein modification; protein lipoylation via endogenous pathway; protein N(6)-(lipoyl)lysine from octanoyl-[acyl-carrier-protein]: step 2/2. Catalyzes the radical-mediated insertion of two sulfur atoms into the C-6 and C-8 positions of the octanoyl moiety bound to the lipoyl domains of lipoate-dependent enzymes, thereby converting the octanoylated domains into lipoylated derivatives. The sequence is that of Lipoyl synthase, mitochondrial from Leishmania infantum.